Here is a 209-residue protein sequence, read N- to C-terminus: Protein GET1 (209 aa).

Topologically, residues 1–3 are lumenal; it reads MSL. Residues 4-23 form a helical membrane-spanning segment; it reads LLVIFLLELVVQLVNTIGAK. Residues 24–110 are Cytoplasmic-facing; it reads TINNLLWRFY…SFSRKLTIYR (87 aa). Residues 74-101 are a coiled coil; it reads WARLQRKHDKLMDELEKKKSQLDAHRTS. The helical transmembrane segment at 111–131 threads the bilayer; it reads WILTRGMQWFLCFWFSSQPMF. The Lumenal segment spans residues 132 to 155; the sequence is WLPYGWFPYWVEWLVSFPNAPMGS. A helical transmembrane segment spans residues 156–172; sequence VSIVVWQSACSGVLALV. Residues 173-209 lie on the Cytoplasmic side of the membrane; sequence IEAVMAVVRYTGGTGMQKQRQPVPAAGGAPGTSKKDL. The segment at 188–209 is disordered; the sequence is MQKQRQPVPAAGGAPGTSKKDL.

This sequence belongs to the WRB/GET1 family. Interacts with GET3.

It localises to the endoplasmic reticulum membrane. Required for the post-translational delivery of tail-anchored (TA) proteins to the endoplasmic reticulum. Acts as a membrane receptor for soluble GET3, which recognizes and selectively binds the transmembrane domain of TA proteins in the cytosol. This chain is Protein GET1, found in Chaetomium thermophilum (strain DSM 1495 / CBS 144.50 / IMI 039719) (Thermochaetoides thermophila).